Consider the following 291-residue polypeptide: tRNA pseudouridine synthase B (291 aa).

Asp-41 functions as the Nucleophile in the catalytic mechanism.

The protein belongs to the pseudouridine synthase TruB family. Type 1 subfamily.

It carries out the reaction uridine(55) in tRNA = pseudouridine(55) in tRNA. In terms of biological role, responsible for synthesis of pseudouridine from uracil-55 in the psi GC loop of transfer RNAs. The protein is tRNA pseudouridine synthase B of Parasynechococcus marenigrum (strain WH8102).